The sequence spans 108 residues: uncharacterized protein (108 aa).

Positions 81 to 108 (FKCLDSPPPVPPSSSQGEDEENTVDSQY) are disordered. Positions 97–108 (GEDEENTVDSQY) are enriched in acidic residues.

This is an uncharacterized protein from Saccharomyces cerevisiae (strain ATCC 204508 / S288c) (Baker's yeast).